The following is a 596-amino-acid chain: Cysteine--tRNA ligase (596 aa).

The unknown stretch occupies residues 1 to 199 (MKSKTFLEKN…SQRYFEELRK (199 aa)). Zn(2+) is bound at residue C212. Residues 214–224 (PTVYDEVHIGN) carry the 'HIGH' region motif. The Zn(2+) site is built by C377, H403, and E407. A 'KMSKS' region motif is present at residues 435 to 439 (KMSKS). K438 lines the ATP pocket.

This sequence belongs to the class-I aminoacyl-tRNA synthetase family. In terms of assembly, monomer. Zn(2+) serves as cofactor.

It is found in the cytoplasm. The enzyme catalyses tRNA(Cys) + L-cysteine + ATP = L-cysteinyl-tRNA(Cys) + AMP + diphosphate. The sequence is that of Cysteine--tRNA ligase (cysS) from Mycoplasmopsis pulmonis (strain UAB CTIP) (Mycoplasma pulmonis).